A 160-amino-acid polypeptide reads, in one-letter code: MNKPLRGAALAAALAGLVALEGSETTAYRDIAGVPTICSGTTAGVKMGDKATPEQCYQMTIKDFQRFERIVLDAIKVPLNVNEQTALTFFCYNVGPVCTTSTAFKRFNQGRATEGCQALAMWNKVTINGQKVVSKGLVNRRNAEIKQCLEPSSQYSSLLW.

Residues 1 to 19 (MNKPLRGAALAAALAGLVA) traverse the membrane as a helical; Signal-anchor for type II membrane protein segment. Residues 20–160 (LEGSETTAYR…PSSQYSSLLW (141 aa)) are Periplasmic-facing. Active-site proton donor/acceptor residues include glutamate 21 and aspartate 30.

Belongs to the glycosyl hydrolase 24 family.

Its subcellular location is the host cell inner membrane. It carries out the reaction Hydrolysis of (1-&gt;4)-beta-linkages between N-acetylmuramic acid and N-acetyl-D-glucosamine residues in a peptidoglycan and between N-acetyl-D-glucosamine residues in chitodextrins.. Functionally, signal-arrest-release (SAR) endolysin with lysozyme activity that degrades host peptidoglycans and participates with the pinholin and spanin proteins in the sequential events which lead to programmed host cell lysis releasing the mature viral particles. Once the pinholin has permeabilized the host cell membrane, the SAR-endolysin is released into the periplasm where it breaks down the peptidoglycan layer. This is SAR-endolysin (45) from Pseudomonas phage phiKMV.